The primary structure comprises 250 residues: MSTRAEVCAVACAELFRDAGEIMISPMTNMASVGARLARLTFAPDILLTDGEAQLLADTPALGKTGAPNRIEGWMPFGRVFETLAWGRRHVVMGANQVDRYGNQNISAFGPLQRPTRQMFGVRGSPGNTINHATSYWVGNHCKRVFVEAVDVVSGIGYDKVDPDNPAFRFVNVYRVVSNLGVFDFGGPDHSMRAVSLHPGVTPGDVRDATSFEVHDLDAAEQTRLPTDDELHLIRAVIDPKSLRDREIRS.

It belongs to the 3-oxoacid CoA-transferase subunit B family. In terms of assembly, heterotetramer composed of 2 IpdA subunits and 2 IpdB subunits.

It carries out the reaction (3E)-2-(2-carboxylatoethyl)-3-methyl-6-oxocyclohex-1-ene-1-carboxyl-CoA + H2O = 6-methyl-3,7-dioxodecanedioyl-CoA. The protein operates within steroid metabolism; cholesterol degradation. Involved in the final steps of cholesterol and steroid degradation. Opens the last steroid ring of cholesterol by catalyzing the hydrolysis of (3E)-2-(2-carboxylatoethyl)-3-methyl-6-oxocyclohex-1-ene-1-carboxyl-CoA (COCHEA-CoA) to 6-methyl-3,7-dioxodecanedioyl-CoA (MeDODA-CoA). The chain is Cholesterol ring-cleaving hydrolase IpdB subunit from Mycobacterium bovis (strain ATCC BAA-935 / AF2122/97).